The primary structure comprises 172 residues: Large ribosomal subunit protein uL10 (172 aa).

This sequence belongs to the universal ribosomal protein uL10 family. Part of the ribosomal stalk of the 50S ribosomal subunit. The N-terminus interacts with L11 and the large rRNA to form the base of the stalk. The C-terminus forms an elongated spine to which L12 dimers bind in a sequential fashion forming a multimeric L10(L12)X complex.

Its function is as follows. Forms part of the ribosomal stalk, playing a central role in the interaction of the ribosome with GTP-bound translation factors. The sequence is that of Large ribosomal subunit protein uL10 from Ruegeria pomeroyi (strain ATCC 700808 / DSM 15171 / DSS-3) (Silicibacter pomeroyi).